Consider the following 294-residue polypeptide: Sarcotoxin-2A (294 aa).

The first 22 residues, 1–22 (MKSFVFFAACMAIIALSSLVQA), serve as a signal peptide directing secretion. Residues 23 to 24 (YP) constitute a propeptide, removed by a dipeptidylpeptidase. Q25 is modified (pyrrolidone carboxylic acid). R293 carries the post-translational modification Arginine amide.

It belongs to the attacin/sarcotoxin-2 family. In terms of tissue distribution, synthesized by the fat body and is eventually secreted into the hemolymph.

It is found in the secreted. Its function is as follows. Sarcotoxin II is an antibacterial protein which plays a role in the inflammatory response of this insect. The main effect of sarcotoxin II on E.coli may be the inhibition of cell wall synthesis, including septum formation. This chain is Sarcotoxin-2A, found in Sarcophaga peregrina (Flesh fly).